A 154-amino-acid chain; its full sequence is SsrA-binding protein (154 aa).

This sequence belongs to the SmpB family.

The protein localises to the cytoplasm. Functionally, required for rescue of stalled ribosomes mediated by trans-translation. Binds to transfer-messenger RNA (tmRNA), required for stable association of tmRNA with ribosomes. tmRNA and SmpB together mimic tRNA shape, replacing the anticodon stem-loop with SmpB. tmRNA is encoded by the ssrA gene; the 2 termini fold to resemble tRNA(Ala) and it encodes a 'tag peptide', a short internal open reading frame. During trans-translation Ala-aminoacylated tmRNA acts like a tRNA, entering the A-site of stalled ribosomes, displacing the stalled mRNA. The ribosome then switches to translate the ORF on the tmRNA; the nascent peptide is terminated with the 'tag peptide' encoded by the tmRNA and targeted for degradation. The ribosome is freed to recommence translation, which seems to be the essential function of trans-translation. The protein is SsrA-binding protein of Lachnoclostridium phytofermentans (strain ATCC 700394 / DSM 18823 / ISDg) (Clostridium phytofermentans).